Here is a 475-residue protein sequence, read N- to C-terminus: Ribulose bisphosphate carboxylase large chain (475 aa).

Residues 1 to 2 (MS) constitute a propeptide that is removed on maturation. Pro3 carries the N-acetylproline modification. At Lys14 the chain carries N6,N6,N6-trimethyllysine. Lys175 functions as the Proton acceptor in the catalytic mechanism. The D-ribulose 1,5-bisphosphate site is built by Lys175 and Lys177. Positions 201, 203, and 204 each coordinate Mg(2+). N6-carboxylysine is present on Lys201. Glu204 lines the D-ribulose 1,5-bisphosphate pocket. The active-site Proton acceptor is His294. Arg295, His327, Lys334, Ser379, Gly381, Gly403, and Gly404 together coordinate D-ribulose 1,5-bisphosphate.

The protein belongs to the RuBisCO large chain family. Type I subfamily. In terms of assembly, heterohexadecamer of 8 large chains and 8 small chains. Heterohexadecamer; disulfide-linked. The disulfide link is formed within the large subunit homodimers. Mg(2+) serves as cofactor. The disulfide bond which can form in the large chain dimeric partners within the hexadecamer appears to be associated with oxidative stress and protein turnover.

The protein resides in the plastid. It is found in the chloroplast. The catalysed reaction is 2 (2R)-3-phosphoglycerate + 2 H(+) = D-ribulose 1,5-bisphosphate + CO2 + H2O. It carries out the reaction D-ribulose 1,5-bisphosphate + O2 = 2-phosphoglycolate + (2R)-3-phosphoglycerate + 2 H(+). RuBisCO catalyzes two reactions: the carboxylation of D-ribulose 1,5-bisphosphate, the primary event in carbon dioxide fixation, as well as the oxidative fragmentation of the pentose substrate in the photorespiration process. Both reactions occur simultaneously and in competition at the same active site. Binds to abscisic acid (ABA); only half of the possible binding sites are occupied in the crystal and there are indications this is a low affinity site. In Pisum sativum (Garden pea), this protein is Ribulose bisphosphate carboxylase large chain.